Consider the following 230-residue polypeptide: Demethylmenaquinone methyltransferase (230 aa).

S-adenosyl-L-methionine contacts are provided by residues Thr-57, Asp-77, and 101–102 (DI).

It belongs to the class I-like SAM-binding methyltransferase superfamily. MenG/UbiE family.

It carries out the reaction a 2-demethylmenaquinol + S-adenosyl-L-methionine = a menaquinol + S-adenosyl-L-homocysteine + H(+). It participates in quinol/quinone metabolism; menaquinone biosynthesis; menaquinol from 1,4-dihydroxy-2-naphthoate: step 2/2. In terms of biological role, methyltransferase required for the conversion of demethylmenaquinol (DMKH2) to menaquinol (MKH2). The chain is Demethylmenaquinone methyltransferase from Chlamydia pneumoniae (Chlamydophila pneumoniae).